The sequence spans 815 residues: Cilia- and flagella-associated protein 251 (815 aa).

WD repeat units lie at residues 58 to 99 (GHTS…PTRT), 103 to 148 (PHRH…TPPE), 166 to 205 (PAGDVQHSIRFSPNNPAELISNGRRRVYFWSWAPGSPRFQ), 218 to 257 (QSVGDFVSSVFVPGTTQALTATTDGDLVVWDEQGIAAQVG), 271 to 308 (IHNCPITLLATVGDFIVSGGEDGYVRFFDPLLRIVAWF), 379 to 418 (SLLADVVDLAAHPTRAEFAVLGRDGGLQRWDSIAHCLLGG), 420 to 460 (AFER…DLYV), 463 to 502 (NTAAGLVRVAVSNTGKHIAAADENHQLLLYAYLPYKHTMR), 511 to 553 (SHHG…VAAG), and 573 to 612 (SFAPPLAYFQAFAADTHLLVSGADGTVASWDINTAPLERS).

Identified in a spoke-associated complex containing CFAP61, CFAP91 and CFAP251; the complex is associated with the radial spokes in the axoneme. The complex associates with Calmodulin; the association is calcium sensitive.

It is found in the cytoplasm. Its subcellular location is the cytoskeleton. The protein resides in the flagellum axoneme. In terms of biological role, as component of a spoke-associated complex, regulates flagellar dynein activity by mediating regulatory signals between the radial spokes and dynein arms. The protein is Cilia- and flagella-associated protein 251 of Chlamydomonas reinhardtii (Chlamydomonas smithii).